The sequence spans 307 residues: tRNA pseudouridine synthase B (307 aa).

D38 (nucleophile) is an active-site residue.

Belongs to the pseudouridine synthase TruB family. Type 1 subfamily.

It catalyses the reaction uridine(55) in tRNA = pseudouridine(55) in tRNA. In terms of biological role, responsible for synthesis of pseudouridine from uracil-55 in the psi GC loop of transfer RNAs. The chain is tRNA pseudouridine synthase B from Bacillus thuringiensis (strain Al Hakam).